A 98-amino-acid polypeptide reads, in one-letter code: Citrate lyase acyl carrier protein (98 aa).

Ser14 carries the O-(phosphoribosyl dephospho-coenzyme A)serine modification.

It belongs to the CitD family. Oligomer with a subunit composition of (alpha,beta,gamma)6.

Its subcellular location is the cytoplasm. Its function is as follows. Covalent carrier of the coenzyme of citrate lyase. The polypeptide is Citrate lyase acyl carrier protein (Salmonella arizonae (strain ATCC BAA-731 / CDC346-86 / RSK2980)).